The chain runs to 180 residues: Ribulose bisphosphate carboxylase small subunit, chloroplastic (180 aa).

The N-terminal 56 residues, M1–N56, are a transit peptide targeting the chloroplast.

The protein belongs to the RuBisCO small chain family. As to quaternary structure, heterohexadecamer of 8 large and 8 small subunits.

The protein localises to the plastid. The protein resides in the chloroplast. RuBisCO catalyzes two reactions: the carboxylation of D-ribulose 1,5-bisphosphate, the primary event in carbon dioxide fixation, as well as the oxidative fragmentation of the pentose substrate. Both reactions occur simultaneously and in competition at the same active site. Although the small subunit is not catalytic it is essential for maximal activity. The protein is Ribulose bisphosphate carboxylase small subunit, chloroplastic of Medicago sativa (Alfalfa).